The sequence spans 27 residues: Zinc metalloproteinase multactivase catalytic subunit (27 aa).

Residues phenylalanine 12–lysine 27 enclose the Peptidase M12B domain. Glutamate 14 is a binding site for Ca(2+).

It belongs to the venom metalloproteinase (M12B) family. P-III subfamily. P-IIId sub-subfamily. Heterodimer of a metalloproteinase subunit and a regulatory subunit comprising two homologous disulfide-linked lectins (AC P81798). Zn(2+) serves as cofactor. As to expression, expressed by the venom gland.

It is found in the secreted. Its function is as follows. This carinactivase-like calcium-dependent prothrombin (F2) activator activates prothrombin via recognition of the calcium ion bound conformation of its gamma-carboxyglutamic acid (GLA) domain, and the subsequent conversion of prothrombin to active thrombin is catalyzed by the catalytic subunit. This is Zinc metalloproteinase multactivase catalytic subunit from Echis multisquamatus (Central Asian sand viper).